The sequence spans 2440 residues: Nuclear receptor corepressor 1 (2440 aa).

A compositionally biased stretch (polar residues) spans 1 to 18; it reads MSSSGYPPNQGAFSTEQS. Disordered stretches follow at residues 1–177 and 206–231; these read MSSS…SKLS and QQQL…VEQK. Positions 1–373 are interaction with ZBTB33 and HEXIM1; it reads MSSSGYPPNQ…QRGAGLSATI (373 aa). Residues 51–64 show a composition bias toward low complexity; it reads SQASQLLQQQQQQQ. Composition is skewed to basic and acidic residues over residues 77 to 88, 99 to 119, and 141 to 155; these read PGSDRPQERRTS, VDHD…DSHF, and ADAK…KHEA. Ser-172 is subject to Phosphoserine. A coiled-coil region spans residues 174 to 216; it reads SKLSKEELIQSMDRVDREIAKVEQQILKLKKKQQQLEEEAAKP. The span at 212-221 shows a compositional bias: basic and acidic residues; the sequence is EAAKPPEPEK. Ser-224 carries the post-translational modification Phosphoserine. The tract at residues 254–312 is interaction with SIN3A/B; the sequence is FEGLGPKVELPLYNQPSDTKVYHENIKTNQVMRKKLILFFKRRNHARKQREQKICQRYD. A coiled-coil region spans residues 299 to 328; it reads ARKQREQKICQRYDQLMEAWEKKVDRIENN. The region spanning 435–486 is the SANT 1 domain; sequence QFMNVWTDHEKEIFKDKFIQHPKNFGLIASYLERKSVPDCVLYYYLTKKNEN. 2 disordered regions span residues 497-632 and 677-915; these read KRRG…TEEE and NLLQ…GSIL. Positions 501–557 form a coiled coil; that stretch reads RNQQIARPSQEEKVEEKEEDKAEKTEKKEEEKKDEEEKDEKEDSKENTKEKDKIDGT. 2 stretches are compositionally biased toward basic and acidic residues: residues 509–531 and 541–556; these read SQEE…KEEE and KEDS…KIDG. Positions 592 to 605 are enriched in low complexity; sequence EAAAASAAAAAATE. A compositionally biased stretch (pro residues) spans 606–617; it reads EPPPPLPPPPEP. Residues 623–674 enclose the SANT 2 domain; the sequence is VETSRWTEEEMEVAKKGLVEHGRNWAAIAKMVGTKSEAQCKNFYFNYKRRHN. The span at 698–708 shows a compositional bias: polar residues; sequence QCESVASTVSA. The segment covering 709 to 728 has biased composition (acidic residues); that stretch reads QEDEDIEASNEEENPEDSEV. Residues 752–768 are compositionally biased toward low complexity; that stretch reads ELEPTTETAPSTSPSLA. The segment covering 781–792 has biased composition (polar residues); the sequence is ETQVNDSISAET. Residues 820–859 show a composition bias toward basic and acidic residues; it reads DSVDVEVRVPENHASKVEGDNTKERDLDRASEKVEPRDED. Composition is skewed to polar residues over residues 864-883 and 906-915; these read QQIN…SATC and SLLNPTGSIL. Residues 988–1816 form an interaction with ETO region; it reads RSSTSPCGTS…QGLPASRYNT (829 aa). Ser-999 carries the post-translational modification Phosphoserine. The interval 1022 to 1046 is disordered; sequence VRLPTTRPTRPPPPLIPSSKTTVAS. Lys-1106 is covalently cross-linked (Glycyl lysine isopeptide (Lys-Gly) (interchain with G-Cter in SUMO1); alternate). Lys-1106 participates in a covalent cross-link: Glycyl lysine isopeptide (Lys-Gly) (interchain with G-Cter in SUMO2); alternate. A Phosphoserine modification is found at Ser-1111. Residue Lys-1184 forms a Glycyl lysine isopeptide (Lys-Gly) (interchain with G-Cter in SUMO2) linkage. The disordered stretch occupies residues 1184–1204; that stretch reads KGSISRMPIEDSSPEKGREEA. Phosphoserine is present on residues Ser-1195, Ser-1196, Ser-1249, Ser-1263, Ser-1281, and Ser-1322. The residue at position 1336 (Lys-1336) is an N6-acetyllysine. At Thr-1367 the chain carries Phosphothreonine. Lys-1389 is covalently cross-linked (Glycyl lysine isopeptide (Lys-Gly) (interchain with G-Cter in SUMO2)). Residue Lys-1412 forms a Glycyl lysine isopeptide (Lys-Gly) (interchain with G-Cter in SUMO2); alternate linkage. N6-acetyllysine; alternate is present on Lys-1412. Residues 1440–1459 are disordered; the sequence is AGETVRSRHTSVVSSGPSVL. 2 positions are modified to phosphoserine: Ser-1450 and Ser-1472. A compositionally biased stretch (polar residues) spans 1488–1512; that stretch reads YQNTMSRGSPMMNRTSDVTISSNKS. Residues 1488–1554 form a disordered region; sequence YQNTMSRGSP…SPFDPHHRGS (67 aa). The segment at 1501-2440 is interaction with C1D; the sequence is RTSDVTISSN…QYETLSDSDD (940 aa). Residue Lys-1518 forms a Glycyl lysine isopeptide (Lys-Gly) (interchain with G-Cter in SUMO2) linkage. The residue at position 1592 (Ser-1592) is a Phosphoserine. Disordered regions lie at residues 1690–1759 and 1884–1922; these read PRPY…SPSP and SSAF…LRTR. Basic and acidic residues-rich tracts occupy residues 1712–1729 and 1903–1921; these read AERE…RERI and AGKD…ELRT. Positions 1933-1937 match the CORNR box 1 motif; the sequence is IDVII. The disordered stretch occupies residues 1943–1969; the sequence is SDKDARERGSQSSDSSSSLSSHRYETP. Low complexity predominate over residues 1952–1963; it reads SQSSDSSSSLSS. A phosphoserine mark is found at Ser-1977 and Ser-1981. Residues 2006–2041 are disordered; sequence PTRQYEGPLHHYRPQQESPSPQQQLPPSSQAEGMGQ. The segment covering 2020–2035 has biased composition (low complexity); that stretch reads QQESPSPQQQLPPSSQ. Residues 2032–2115 form an ID1 region; sequence PSSQAEGMGQ…QAQSVHHQRP (84 aa). Positions 2047–2050 are required for interaction with RARA in the absence of its ligand; sequence RLIT. Residues 2055–2059 carry the CORNR box 2 motif; that stretch reads ICQII. Positions 2067 to 2086 are enriched in low complexity; it reads QVSSQTPQQPPTSTFQNSPS. The disordered stretch occupies residues 2067 to 2155; that stretch reads QVSSQTPQQP…PYEPISPPQV (89 aa). Residues 2087–2110 are compositionally biased toward polar residues; the sequence is ALVSTPVRTKTSNRYSPESQAQSV. A phosphoserine mark is found at Ser-2102, Ser-2120, Ser-2136, Ser-2151, and Ser-2184. Basic and acidic residues predominate over residues 2124–2142; sequence LVDKSRGSRPGKSPERSHV. The tract at residues 2212 to 2273 is ID2; the sequence is IFRKLNSSGG…EDIIRKALMG (62 aa). The CORNR box 3 signature appears at 2263 to 2267; the sequence is LEDII. Residues 2287–2440 are disordered; the sequence is SQPMGVVPGT…QYETLSDSDD (154 aa). Over residues 2296 to 2305 the composition is skewed to polar residues; sequence TANTSVVTSG. Thr-2399 bears the Phosphothreonine mark. Composition is skewed to polar residues over residues 2407–2418 and 2431–2440; these read AVNQAAPHQQNR and QYETLSDSDD. Residues Ser-2436 and Ser-2438 each carry the phosphoserine modification.

Belongs to the N-CoR nuclear receptor corepressors family. Forms a large corepressor complex that contains SIN3A/B and histone deacetylases HDAC1 and HDAC2. This complex associates with the thyroid receptor (TR) and the retinoid acid receptor (RAR) in the absence of ligand. Interacts directly with RARA; the interaction is facilitated with RARA trimethylation. Component of the N-Cor repressor complex, at least composed of CBFA2T3, HEXIM1, NCOR1, NCOR2, HDAC3, TBL1X, TBL1XR1, CORO2A and GPS2. Interacts with ZBTB33; the interaction serves to recruit the N-CoR complex to promoter regions containing methylated CpG dinucleotides. Interacts with TRIM28 and KDM3A. Interacts (via the RD1 domain) with BAZ1A (via its N-terminal); the interaction corepresses a number of NCOR1-regulated genes. Interacts with BCL6, C1D, DACH1, HEXIM1, HDAC7, RORA, RORC, SAP30, SIAH2, SIN3A and SIN3B. May interact with DEAF1. Interacts with RXRA. Interacts with SETD5. Interacts with VDR. Interacts with ZBTB7A. Interacts with AR. Interacts with HDAC3. Post-translationally, ubiquitinated; mediated by SIAH2 and leading to its subsequent proteasomal degradation.

The protein resides in the nucleus. In terms of biological role, mediates transcriptional repression by certain nuclear receptors. Part of a complex which promotes histone deacetylation and the formation of repressive chromatin structures which may impede the access of basal transcription factors. Participates in the transcriptional repressor activity produced by BCL6. Recruited by ZBTB7A to the androgen response elements/ARE on target genes, negatively regulates androgen receptor signaling and androgen-induced cell proliferation. Mediates the NR1D1-dependent repression and circadian regulation of TSHB expression. The NCOR1-HDAC3 complex regulates the circadian expression of the core clock gene ARTNL/BMAL1 and the genes involved in lipid metabolism in the liver. In Homo sapiens (Human), this protein is Nuclear receptor corepressor 1 (NCOR1).